Consider the following 289-residue polypeptide: Phospholipase A1 (289 aa).

Residues 1-20 (MRAILRGLLPATLLPLAAYA) form the signal peptide. The Periplasmic segment spans residues 21-52 (QEATIKEVHDAPAVRGSIIANMLQEHDNPFTL). The chain crosses the membrane as a beta stranded span at residues 53-65 (YPYDTNYLIYTNT). At 66-84 (SDLNKEAISTYNWSENARK) the chain is on the extracellular side. The beta stranded transmembrane segment at 85-99 (DEVKFQLSLAFPLWR) threads the bilayer. The Periplasmic segment spans residues 100–105 (GILGPN). A beta stranded membrane pass occupies residues 106–118 (SVLGASYTQKSWW). At 119–128 (QLSNSKESSP) the chain is on the extracellular side. Serine 126 lines the Ca(2+) pocket. Residues 129-148 (FRETNYEPQLFLGFATDYRF) traverse the membrane as a beta stranded segment. Over 149–150 (AG) the chain is Periplasmic. Residues 151-164 (WTLRDVEMGYNHDS) traverse the membrane as a beta stranded segment. Catalysis depends on histidine 162, which acts as the Proton acceptor. Serine 164 (nucleophile) is an active-site residue. Residues 165 to 173 (NGRSDPTSR) lie on the Extracellular side of the membrane. Positions 167 and 172 each coordinate Ca(2+). The chain crosses the membrane as a beta stranded span at residues 174-186 (SWNRLYTRLMAEN). At 187-188 (GN) the chain is on the periplasmic side. The beta stranded transmembrane segment at 189 to 198 (WLVEVKPWYV) threads the bilayer. Residues 199 to 216 (IGSTDDNPDITKYMGYYQ) lie on the Extracellular side of the membrane. Aspartate 204 is a Ca(2+) binding site. The beta stranded transmembrane segment at 217–223 (LKIGYHL) threads the bilayer. The Periplasmic segment spans residues 224 to 225 (GE). Residues 226–234 (AVLSAKGQY) traverse the membrane as a beta stranded segment. Residues 235–241 (NWNTGYG) lie on the Extracellular side of the membrane. Residues 242 to 250 (GAEVGLSYP) form a beta stranded membrane-spanning segment. The Periplasmic segment spans residues 251–255 (VTKHV). The beta stranded transmembrane segment at 256–265 (RLYTQVYSGY) threads the bilayer. The Extracellular portion of the chain corresponds to 266–274 (GESLIDYNF). A beta stranded transmembrane segment spans residues 275–286 (NQTRVGVGVMLN). The Periplasmic segment spans residues 287–289 (DIF).

This sequence belongs to the phospholipase A1 family. Homodimer; dimerization is reversible, and the dimeric form is the active one. The cofactor is Ca(2+).

It is found in the cell outer membrane. The enzyme catalyses a 1,2-diacyl-sn-glycero-3-phosphocholine + H2O = a 2-acyl-sn-glycero-3-phosphocholine + a fatty acid + H(+). The catalysed reaction is a 1,2-diacyl-sn-glycero-3-phosphocholine + H2O = a 1-acyl-sn-glycero-3-phosphocholine + a fatty acid + H(+). In terms of biological role, hydrolysis of phosphatidylcholine with phospholipase A2 (EC 3.1.1.4) and phospholipase A1 (EC 3.1.1.32) activities. This chain is Phospholipase A1 (pldA), found in Salmonella typhi.